A 1077-amino-acid polypeptide reads, in one-letter code: Response regulator SSK1 (1077 aa).

The Response regulatory domain occupies 854-1000; sequence NVLIVEDNII…FLERKVMEWG (147 aa). Asp-903 is modified (4-aspartylphosphate).

Belongs to the SSK1 family.

Its subcellular location is the cytoplasm. Functionally, two-domain response regulator protein in the two-component signal transduction system of the HOG1 pathway. Involved in multi-stress responses and is essential for conidiation, secondary metabolism, autophagy and endocyrosis. In addition, regulates mycelial growth, cell nucleus development, septum formation, and organelle development. Also regulates trap formation and thus plays a crucial role in pathogenicity. This chain is Response regulator SSK1, found in Arthrobotrys oligospora (strain ATCC 24927 / CBS 115.81 / DSM 1491) (Nematode-trapping fungus).